Consider the following 171-residue polypeptide: 3-hydroxydecanoyl-[acyl-carrier-protein] dehydratase (171 aa).

Residue His-70 is part of the active site.

The protein belongs to the thioester dehydratase family. FabA subfamily. Homodimer.

It is found in the cytoplasm. The enzyme catalyses a (3R)-hydroxyacyl-[ACP] = a (2E)-enoyl-[ACP] + H2O. It catalyses the reaction (3R)-hydroxydecanoyl-[ACP] = (2E)-decenoyl-[ACP] + H2O. The catalysed reaction is (2E)-decenoyl-[ACP] = (3Z)-decenoyl-[ACP]. It participates in lipid metabolism; fatty acid biosynthesis. In terms of biological role, necessary for the introduction of cis unsaturation into fatty acids. Catalyzes the dehydration of (3R)-3-hydroxydecanoyl-ACP to E-(2)-decenoyl-ACP and then its isomerization to Z-(3)-decenoyl-ACP. Can catalyze the dehydratase reaction for beta-hydroxyacyl-ACPs with saturated chain lengths up to 16:0, being most active on intermediate chain length. In Chromohalobacter salexigens (strain ATCC BAA-138 / DSM 3043 / CIP 106854 / NCIMB 13768 / 1H11), this protein is 3-hydroxydecanoyl-[acyl-carrier-protein] dehydratase.